A 263-amino-acid polypeptide reads, in one-letter code: (R)-S-adenosyl-L-methionine hydrolase (263 aa).

The adenosine site is built by Asp-18, Asp-82, and Asn-181. (R)-S-adenosyl-L-methionine is bound by residues Asn-181, Tyr-221, Ser-234, Glu-239, and Met-244.

The protein belongs to the SAM hydrolase / SAM-dependent halogenase family. Homotrimer.

It carries out the reaction (R)-S-adenosyl-L-methionine + H2O = adenosine + L-methionine + H(+). Functionally, catalyzes the hydrolysis of S-adenosyl-L-methionine (SAM) into adenosine and L-methionine. Does not have chlorinase or fluorinase activity. In Methanocaldococcus jannaschii (strain ATCC 43067 / DSM 2661 / JAL-1 / JCM 10045 / NBRC 100440) (Methanococcus jannaschii), this protein is (R)-S-adenosyl-L-methionine hydrolase.